The primary structure comprises 163 residues: Nucleotide-binding protein MT0592 (163 aa).

This sequence belongs to the YajQ family.

Functionally, nucleotide-binding protein. The chain is Nucleotide-binding protein MT0592 from Mycobacterium tuberculosis (strain CDC 1551 / Oshkosh).